A 376-amino-acid chain; its full sequence is RNA binding protein fox-1 homolog 1 (376 aa).

Residues 1 to 126 form a disordered region; sequence MEEKGSRMVQ…QPKRLHVSNI (126 aa). Positions 72–89 are enriched in polar residues; it reads QTHSEQSPADTNAQTVSG. Over residues 90 to 101 the composition is skewed to low complexity; that stretch reads TATQTDDAAPTD. Polar residues predominate over residues 102-115; the sequence is GQPQTQPSENTENK. In terms of domain architecture, RRM spans 119–195; the sequence is KRLHVSNIPF…RKIEVNNATA (77 aa). Arg319 carries the asymmetric dimethylarginine modification.

As to quaternary structure, binds to the C-terminus of ATXN2.

It localises to the nucleus. The protein localises to the cytoplasm. RNA-binding protein that regulates alternative splicing events by binding to 5'-UGCAUGU-3' elements. Prevents binding of U2AF2 to the 3'-splice site. Regulates alternative splicing of tissue-specific exons and of differentially spliced exons during erythropoiesis. The protein is RNA binding protein fox-1 homolog 1 (RBFOX1) of Macaca fascicularis (Crab-eating macaque).